Here is a 1660-residue protein sequence, read N- to C-terminus: MATDGASCEPDLSRAPEDAAGATAEAAKKEFDVDTLSKSELRMLLSVMEGELEARDLVIEALRARRKEVFIQERYGRFNLNDPFLALQRDYEAGAGDKEKKPVCTNPLSILEAVMAHCRKMQERMSAQLAAAESRQKKLEMEKLQLQALEQEHKKLAARLEEERGKNKQVVLMLVKECKQLSGKVIEEAQKLEDVMAKLEEEKKKTNELEEELSAEKRRSTEMEAQMEKQLSEFDTEREQLRAKLNREEAHTTDLKEEIDKMKKMIEQLKRGSDSKPSLSLPRKTKDRRLVSISVGTEGTVTRSVACQTDLVTESADHVKKLPLTTPVKPSTGSPLASANAKGSVCTSAAMARPGIDRQASHGDLIGVSVPAFPPSSANRIEENGPSTGSTPDPTSSTPPLPSNAAPPTAQTPGITPQNSQAPPMHSLHSPCANASLHPGLNPRIQAARFRFQGNANDPDQNGNTTQSPPSRDVSPTSRDNLVAKQLARNTVTQALSRFTGPQAGAPPRPGAPPTADVGTHPSVGRTSVKTHGVARVDRGNPPPIPPKKPGLSQTPSPPHPQLKVLIDSSRASNTGAKGDNKTVASPPSSLPQGNRVINEENLSKSSSPQLPPKPSIDLTVAPAGCAVSALATSQVGAWPAATPGLNQPACSDSSLVIPTTIAFCSSINPVSASSCRPGASDSLLVTASGWSPSLTPLLMSGGPAPLAGRPTLLQQAAAQGNVTLLSMLLNEEGLDINYSCEDGHSALYSAAKNGHTDCVRLLLSAEAQVNAADKNGFTPLCAAAAQGHFECVELLVAYDAHINHAADGGQTPLYLACKNGNKECIKLLLEAGADRSVKTTDGWTSVHAAVDTGNVDSLKLLMYHRVPAHGNSFSEEESESGVFDLDGEEESPEGKSKPVVTADLINHANREGWTAAHIAASKGFKNCLEILCRHGGLETERRDKCNRTAHDVATDDCKHLLENLNALKIPLRILVDEVEPSNYGSDDFECENTICALNIRKQTSWDDFSKAVSQALTNHFQAISSDGWWSLEDVTCNNTTDSNIGLSARSIRSITLGNVPWSVGQSFAQSPWDFMMKNKAEHITVLLSGPQEGCLSSVTYASMIPLQMMQNYLRLVEQYHNVIFHGPEGSLQDYIVHQLALCLKHRQMAAGFSCEIVRAEVDASFSKKQLLDLFISSACLIPVKQSPVKKKIIIILENLEKSSLSELLRDFLAPLENRSTESPCTFQKGNGMSECYYFHENCFLMGTIAKACLQGSDLLVQQHFRWVQLRWDGEPMQGLLQRFLRRKVVNKFRGQVPPPCDPVCKIVDWALSVWRQLNSCLARLGTPEALLGPKYFLSCPVVPGHAQVTVKWMSKLWNGVITPRVQEAILSRASVKRQPGFGQTTAKRHPSQGQQAVVKAALSILLNKAVLHGCPLPRAELAQHTADFKGGSFPLSIVSSYNSCSKKKGESGSWRKVNTSPRRKSGRFSLPTWNKPDLSTEGIKNKTLSQLNCNRNASLSKQKSLENDVSLTLNLDQSLFLGSDDEADLVKELQSMCSSKSESDISKIADSRDDLRTFDSSGNNPVFLATINNLRMPVSQKEVCPLSSHQTTECSNSKSKTELDVSRVKSFLPVPRSKVTQCSQNTKSSSSNTRQIEINNSKEENWNFHKNEHLEKPNK.

Disordered stretches follow at residues 1–26 (MATD…TAEA), 203–222 (KKKT…RSTE), 366–440 (IGVS…LHPG), and 454–478 (GNAN…SPTS). A coiled-coil region spans residues 119–276 (RKMQERMSAQ…EQLKRGSDSK (158 aa)). Low complexity predominate over residues 386–396 (PSTGSTPDPTS). A compositionally biased stretch (polar residues) spans 411–422 (QTPGITPQNSQA). Arginine 498 is subject to Asymmetric dimethylarginine. The interval 499–596 (FTGPQAGAPP…PPSSLPQGNR (98 aa)) is disordered. Residues 583-593 (TVASPPSSLPQ) show a composition bias toward polar residues. ANK repeat units lie at residues 709–739 (GRPT…DINY), 743–772 (DGHS…QVNA), 776–805 (NGFT…HINH), 809–838 (GGQT…DRSV), and 842–871 (DGWT…PAHG). The tract at residues 872–897 (NSFSEEESESGVFDLDGEEESPEGKS) is disordered. Residues 875–892 (SEEESESGVFDLDGEEES) are compositionally biased toward acidic residues. Residues 912–942 (EGWTAAHIAASKGFKNCLEILCRHGGLETER) form an ANK 6 repeat. The interval 1445 to 1477 (CSKKKGESGSWRKVNTSPRRKSGRFSLPTWNKP) is disordered. Serine 1524 is modified (phosphoserine). The segment at 1617–1660 (RSKVTQCSQNTKSSSSNTRQIEINNSKEENWNFHKNEHLEKPNK) is disordered. Positions 1619 to 1640 (KVTQCSQNTKSSSSNTRQIEIN) are enriched in polar residues. The span at 1641–1660 (NSKEENWNFHKNEHLEKPNK) shows a compositional bias: basic and acidic residues.

As to quaternary structure, interacts with CTTN/cortactin SH3 domain. Interacts with STRN, STRN4/zinedin and MOB4/phocein; this interactions mediate the association with the STRIPAK core complex and may regulate dendritic spine distribution of the STRIPAK complex in hippocampal neurons. Activation of glutamate receptors weakens the interaction with STRN and STRN4.

The protein localises to the cytoplasm. Its subcellular location is the cell cortex. It is found in the cell projection. It localises to the dendritic spine. In terms of biological role, regulates the dendritic spine distribution of CTTN/cortactin in hippocampal neurons, and thus controls dendritic spinogenesis and dendritic spine maintenance. Associates with the striatin-interacting phosphatase and kinase (STRIPAK) core complex to regulate dendritic spine distribution of the STRIPAK complex in hippocampal neurons. The sequence is that of Cortactin-binding protein 2 (CTTNBP2) from Ateles geoffroyi (Black-handed spider monkey).